The sequence spans 210 residues: Thiamine-phosphate synthase 2 (210 aa).

4-amino-2-methyl-5-(diphosphooxymethyl)pyrimidine is bound by residues 38-42 (QLREK) and aspartate 70. Residues aspartate 71 and glutamate 90 each contribute to the Mg(2+) site. Threonine 109 contributes to the 4-amino-2-methyl-5-(diphosphooxymethyl)pyrimidine binding site. Residue 135 to 137 (TTT) coordinates 2-[(2R,5Z)-2-carboxy-4-methylthiazol-5(2H)-ylidene]ethyl phosphate. A 4-amino-2-methyl-5-(diphosphooxymethyl)pyrimidine-binding site is contributed by lysine 138. A 2-[(2R,5Z)-2-carboxy-4-methylthiazol-5(2H)-ylidene]ethyl phosphate-binding site is contributed by glycine 165.

It belongs to the thiamine-phosphate synthase family. Mg(2+) serves as cofactor.

The catalysed reaction is 2-[(2R,5Z)-2-carboxy-4-methylthiazol-5(2H)-ylidene]ethyl phosphate + 4-amino-2-methyl-5-(diphosphooxymethyl)pyrimidine + 2 H(+) = thiamine phosphate + CO2 + diphosphate. It catalyses the reaction 2-(2-carboxy-4-methylthiazol-5-yl)ethyl phosphate + 4-amino-2-methyl-5-(diphosphooxymethyl)pyrimidine + 2 H(+) = thiamine phosphate + CO2 + diphosphate. The enzyme catalyses 4-methyl-5-(2-phosphooxyethyl)-thiazole + 4-amino-2-methyl-5-(diphosphooxymethyl)pyrimidine + H(+) = thiamine phosphate + diphosphate. It functions in the pathway cofactor biosynthesis; thiamine diphosphate biosynthesis; thiamine phosphate from 4-amino-2-methyl-5-diphosphomethylpyrimidine and 4-methyl-5-(2-phosphoethyl)-thiazole: step 1/1. Its function is as follows. Condenses 4-methyl-5-(beta-hydroxyethyl)thiazole monophosphate (THZ-P) and 2-methyl-4-amino-5-hydroxymethyl pyrimidine pyrophosphate (HMP-PP) to form thiamine monophosphate (TMP). This is Thiamine-phosphate synthase 2 from Streptococcus pneumoniae serotype 4 (strain ATCC BAA-334 / TIGR4).